The chain runs to 156 residues: Small ribosomal subunit protein uS7 (156 aa).

The protein belongs to the universal ribosomal protein uS7 family. Part of the 30S ribosomal subunit. Contacts proteins S9 and S11.

One of the primary rRNA binding proteins, it binds directly to 16S rRNA where it nucleates assembly of the head domain of the 30S subunit. Is located at the subunit interface close to the decoding center, probably blocks exit of the E-site tRNA. The protein is Small ribosomal subunit protein uS7 of Pseudomonas fluorescens (strain SBW25).